Here is a 146-residue protein sequence, read N- to C-terminus: Horcolin (146 aa).

The tract at residues 1–21 is disordered; it reads MSKPVKIGPWGGNGGSERDVQ. The 143-residue stretch at 4 to 146 folds into the Jacalin-type lectin domain; sequence PVKIGPWGGN…LDAIGFYITP (143 aa).

This sequence belongs to the jacalin lectin family.

It is found in the secreted. The protein localises to the extracellular space. The protein resides in the apoplast. Mannose-specific lectin. Has a weak agglutinating activity against rabbit erythrocytes. The chain is Horcolin from Hordeum vulgare (Barley).